A 524-amino-acid polypeptide reads, in one-letter code: Probable endopeptidase p60 (524 aa).

A signal peptide spans 1 to 27 (MNMKKATIAATAGIAVTAFAAPTIASA). The 44-residue stretch at 28 to 71 (STVVVEAGDTLWGIAQSKGTTVDALKKANNLTSDKIVPGQKLQV) folds into the LysM 1 domain. An SH3b domain is found at 78–142 (KTEKSVSATW…VNGKYLGDAV (65 aa)). The tract at residues 150–188 (QEVKQETTKQTAPAAETKTEVKQSTPAPTAPKAAETKTA) is disordered. Over residues 174–188 (TPAPTAPKAAETKTA) the composition is skewed to low complexity. The LysM 2 domain occupies 196–239 (TTHTVKSGDTIWALSVKYGASVQDLMSWNNLSSSSIYVGQKIAV). A compositionally biased stretch (low complexity) spans 272 to 299 (NTNTTVKKEVTTQTQTNTTKAPAQAAKP). Positions 272-313 (NTNTTVKKEVTTQTQTNTTKAPAQAAKPAPAPAPAPTVNTNA) are disordered. The 44-residue stretch at 314 to 357 (STYTVKSGDSLSKIANTFGTSVSKIKALNNLTSDNLQVGTVLKV) folds into the LysM 3 domain. Residues 360-408 (TVPTTNTNNNSNTTAPTTNTSNNNTSSNTSTPSKNTNTNTNQGSSNSAS) form a disordered region. Low complexity predominate over residues 362–408 (PTTNTNNNSNTTAPTTNTSNNNTSSNTSTPSKNTNTNTNQGSSNSAS). The NlpC/P60 domain occupies 406–524 (SASASALIAE…GKYLVGFGRV (119 aa)). Catalysis depends on Cys436, which acts as the Nucleophile. His486 (proton acceptor) is an active-site residue. The active site involves Asn498.

It belongs to the peptidase C40 family.

Functionally, this major extracellular protein may be involved in the invasion of non-professional phagocytic cells by Listeria. The chain is Probable endopeptidase p60 (iap) from Listeria welshimeri.